A 462-amino-acid chain; its full sequence is uncharacterized protein (462 aa).

In terms of domain architecture, TRAM spans 12–70 (MLKKNDIIQVAISDLSHEGAGVAKHDGFVFFVDNALPEEVIDMRVLKVNKNSGFGKVEA). Positions 294, 323, 344, and 392 each coordinate S-adenosyl-L-methionine. Cys-419 (nucleophile) is an active-site residue.

It belongs to the class I-like SAM-binding methyltransferase superfamily. RNA M5U methyltransferase family.

This is an uncharacterized protein from Streptococcus pyogenes serotype M18 (strain MGAS8232).